We begin with the raw amino-acid sequence, 340 residues long: Glyceraldehyde-3-phosphate dehydrogenase (340 aa).

NAD(+) is bound by residues 12–13 (RI), Asp40, Lys85, and Ser128. D-glyceraldehyde 3-phosphate-binding positions include 158 to 160 (SCT), Thr189, Arg204, 217 to 218 (TG), and Arg240. Cys159 acts as the Nucleophile in catalysis. An Isoglutamyl lysine isopeptide (Lys-Gln) (interchain with Q-Cter in protein Pup) cross-link involves residue Lys257. Asn321 serves as a coordination point for NAD(+).

The protein belongs to the glyceraldehyde-3-phosphate dehydrogenase family. Homotetramer.

Its subcellular location is the cytoplasm. It carries out the reaction D-glyceraldehyde 3-phosphate + phosphate + NAD(+) = (2R)-3-phospho-glyceroyl phosphate + NADH + H(+). The protein operates within carbohydrate degradation; glycolysis; pyruvate from D-glyceraldehyde 3-phosphate: step 1/5. Its function is as follows. Catalyzes the oxidative phosphorylation of glyceraldehyde 3-phosphate (G3P) to 1,3-bisphosphoglycerate (BPG) using the cofactor NAD. The first reaction step involves the formation of a hemiacetal intermediate between G3P and a cysteine residue, and this hemiacetal intermediate is then oxidized to a thioester, with concomitant reduction of NAD to NADH. The reduced NADH is then exchanged with the second NAD, and the thioester is attacked by a nucleophilic inorganic phosphate to produce BPG. The protein is Glyceraldehyde-3-phosphate dehydrogenase (gapA) of Mycolicibacterium smegmatis (strain ATCC 700084 / mc(2)155) (Mycobacterium smegmatis).